Here is a 207-residue protein sequence, read N- to C-terminus: Serotonin N-acetyltransferase (207 aa).

The segment at 1-28 (MSMQSTHPPKPEAPRLPPGIPESPSCQR) is disordered. Thr31 bears the Phosphothreonine; by PKA mark. One can recognise an N-acetyltransferase domain in the interval 35–202 (SEFRCLTPED…CSLRDHPFLR (168 aa)). Leu124 lines the substrate pocket. Acetyl-CoA is bound by residues 124–126 (LAV) and 132–137 (QQGRGP). Residue Met159 coordinates substrate. 168 to 170 (YER) is a binding site for acetyl-CoA. Phosphoserine is present on Ser205.

This sequence belongs to the acetyltransferase family. AANAT subfamily. As to quaternary structure, monomer. Interacts with several 14-3-3 proteins, including YWHAB, YWHAE, YWHAG and YWHAZ, preferentially when phosphorylated at Thr-31. Phosphorylation on Ser-205 also allows binding to YWHAZ, but with lower affinity. The interaction with YWHAZ considerably increases affinity for arylalkylamines and acetyl-CoA and protects the enzyme from dephosphorylation and proteasomal degradation. It may also prevent thiol-dependent inactivation. Post-translationally, cAMP-dependent phosphorylation on both N-terminal Thr-31 and C-terminal Ser-205 regulates AANAT activity by promoting interaction with 14-3-3 proteins.

The protein localises to the cytoplasm. The catalysed reaction is a 2-arylethylamine + acetyl-CoA = an N-acetyl-2-arylethylamine + CoA + H(+). It participates in aromatic compound metabolism; melatonin biosynthesis; melatonin from serotonin: step 1/2. Functionally, controls the night/day rhythm of melatonin production in the pineal gland. Catalyzes the N-acetylation of serotonin into N-acetylserotonin, the penultimate step in the synthesis of melatonin. The polypeptide is Serotonin N-acetyltransferase (AANAT) (Pan troglodytes (Chimpanzee)).